A 155-amino-acid chain; its full sequence is Ribosomal RNA large subunit methyltransferase H (155 aa).

Residues Leu-72, Gly-103, and 122–127 (FGRMVW) each bind S-adenosyl-L-methionine.

Belongs to the RNA methyltransferase RlmH family. As to quaternary structure, homodimer.

The protein localises to the cytoplasm. The catalysed reaction is pseudouridine(1915) in 23S rRNA + S-adenosyl-L-methionine = N(3)-methylpseudouridine(1915) in 23S rRNA + S-adenosyl-L-homocysteine + H(+). In terms of biological role, specifically methylates the pseudouridine at position 1915 (m3Psi1915) in 23S rRNA. The protein is Ribosomal RNA large subunit methyltransferase H of Paracoccus denitrificans (strain Pd 1222).